The chain runs to 242 residues: Putative pyrimidine-specific ribonucleoside hydrolase RihB (242 aa).

Positions 156 and 168 each coordinate substrate.

It belongs to the IUNH family. RihB subfamily.

It catalyses the reaction a pyrimidine ribonucleoside + H2O = a pyrimidine nucleobase + D-ribose. This Shigella boydii serotype 4 (strain Sb227) protein is Putative pyrimidine-specific ribonucleoside hydrolase RihB (rihB).